A 488-amino-acid chain; its full sequence is Prostaglandin E2 receptor EP4 subtype (488 aa).

Over 1–19 the chain is Extracellular; sequence MSTPGVNSSASLSPDRLNS. Asn7 carries an N-linked (GlcNAc...) asparagine glycan. A helical membrane pass occupies residues 20–43; it reads PVTIPAVMFIFGVVGNLVAIVVLC. Over 44–55 the chain is Cytoplasmic; the sequence is KSRKEQKETTFY. Residues 56–79 form a helical membrane-spanning segment; sequence TLVCGLAVTDLLGTLLVSPVTIAT. Residues 80 to 96 lie on the Extracellular side of the membrane; that stretch reads YMKGQWPGGQPLCEYST. A disulfide bridge links Cys92 with Cys170. A helical transmembrane segment spans residues 97-115; the sequence is FILLFFSLSGLSIICAMSV. Residues 116–135 lie on the Cytoplasmic side of the membrane; sequence ERYLAINHAYFYSHYVDKRL. The chain crosses the membrane as a helical span at residues 136–160; sequence AGLTLFAVYASNVLFCALPNMGLGS. Residues 161 to 184 lie on the Extracellular side of the membrane; it reads SRLQYPDTWCFIDWTTNVTAHAAY. Residues 185 to 211 form a helical membrane-spanning segment; sequence SYMYAGFSSFLILATVLCNVLVCGALL. At 212–267 the chain is on the cytoplasmic side; it reads RMHRQFMRRTSLGTEQHHAAAAASVASRGHPAASPALPRLSDFRRRRSFRRIAGAE. Residues 268–295 form a helical membrane-spanning segment; it reads IQMVILLIATSLVVLICSIPLVVRVFVN. Residues 296 to 312 lie on the Extracellular side of the membrane; that stretch reads QLYQPSLEREVSKNPDL. A helical transmembrane segment spans residues 313–332; that stretch reads QAIRIASVNPILDPWIYILL. Topologically, residues 333–488 are cytoplasmic; sequence RKTVLSKAIE…ETLNLSEKCI (156 aa). A disordered region spans residues 356 to 376; it reads RERSGQHCSDSQRTSSAMSGH. The segment covering 361 to 376 has biased composition (polar residues); sequence QHCSDSQRTSSAMSGH. Residues Ser374, Ser377, Ser379, and Ser382 each carry the phosphoserine modification. Residues 437–449 are compositionally biased toward polar residues; it reads SETSDSSQGQDSE. The segment at 437–475 is disordered; it reads SETSDSSQGQDSESVLLVDEAGGSGRAGPAPKGSSLQVT.

Belongs to the G-protein coupled receptor 1 family. As to quaternary structure, interacts with FEM1A. Post-translationally, phosphorylation mediates agonist-mediated desensitization by promoting cytoplasmic retention. As to expression, high in intestine and in peripheral blood mononuclear cells; low in lung, kidney, thymus, uterus, vasculature and brain. Not found in liver, heart, retina oe skeletal muscle.

The protein resides in the cell membrane. In terms of biological role, receptor for prostaglandin E2 (PGE2). The activity of this receptor is mediated by G(s) proteins that stimulate adenylate cyclase. Has a relaxing effect on smooth muscle. May play an important role in regulating renal hemodynamics, intestinal epithelial transport, adrenal aldosterone secretion, and uterine function. The protein is Prostaglandin E2 receptor EP4 subtype (PTGER4) of Homo sapiens (Human).